Consider the following 378-residue polypeptide: Probable G-protein coupled receptor frpr-1 (378 aa).

Helical transmembrane passes span 47 to 67 (LVVI…GNAL), 85 to 105 (LFAL…LFFL), 120 to 140 (AVLS…SVFI), 180 to 200 (VIVC…YNSP), 243 to 263 (TIVM…AIVI), 277 to 297 (IITL…PLTV), and 315 to 337 (SNLM…GSNF).

It belongs to the G-protein coupled receptor 1 family.

It is found in the cell membrane. The polypeptide is Probable G-protein coupled receptor frpr-1 (Caenorhabditis elegans).